The primary structure comprises 191 residues: Ribonuclease HII (191 aa).

The RNase H type-2 domain maps to Tyr-4–Gln-191. Asp-10, Glu-11, and Asp-106 together coordinate a divalent metal cation.

The protein belongs to the RNase HII family. Requires Mn(2+) as cofactor. Mg(2+) is required as a cofactor.

Its subcellular location is the cytoplasm. The enzyme catalyses Endonucleolytic cleavage to 5'-phosphomonoester.. Endonuclease that specifically degrades the RNA of RNA-DNA hybrids. This Prochlorococcus marinus (strain SARG / CCMP1375 / SS120) protein is Ribonuclease HII.